We begin with the raw amino-acid sequence, 351 residues long: Phosphoribosylformylglycinamidine cyclo-ligase (351 aa).

The protein belongs to the AIR synthase family.

The protein resides in the cytoplasm. It carries out the reaction 2-formamido-N(1)-(5-O-phospho-beta-D-ribosyl)acetamidine + ATP = 5-amino-1-(5-phospho-beta-D-ribosyl)imidazole + ADP + phosphate + H(+). The protein operates within purine metabolism; IMP biosynthesis via de novo pathway; 5-amino-1-(5-phospho-D-ribosyl)imidazole from N(2)-formyl-N(1)-(5-phospho-D-ribosyl)glycinamide: step 2/2. The chain is Phosphoribosylformylglycinamidine cyclo-ligase from Xylella fastidiosa (strain Temecula1 / ATCC 700964).